A 433-amino-acid chain; its full sequence is Type I acyl-CoA thioesterase mpaH' (433 aa).

The abhydrolase domain stretch occupies residues 58–246 (HGVGLPKELY…IKALFGTTAD (189 aa)). Val-60 serves as a coordination point for substrate. Ser-139 serves as the catalytic Nucleophile. A substrate-binding site is contributed by Phe-140. Active-site residues include Asp-163 and His-365.

The protein belongs to the AB hydrolase superfamily. MpaH hydrolase family. Homodimer.

Its subcellular location is the peroxisome matrix. The enzyme catalyses mycophenolyl-CoA + H2O = mycophenolate + CoA + H(+). The protein operates within secondary metabolite biosynthesis; terpenoid biosynthesis. Type I acyl-CoA thioesterase; part of the gene cluster that mediates the biosynthesis of mycophenolic acid (MPA), the first isolated antibiotic natural product in the world obtained from a culture of Penicillium brevicompactum in 1893. MpaH' acts as a peroxisomal acyl-CoA hydrolase that converts MPA-CoA into the final product MPA. The first step of the pathway is the synthesis of 5-methylorsellinic acid (5MOA) by the cytosolic polyketide synthase mpaC. 5MOA is then converted to the phthalide compound 5,7-dihydroxy-4,6-dimethylphthalide (DHMP) by the endoplasmic reticulum-bound cytochrome P450 monooxygenase mpaDE. MpaDE first catalyzes hydroxylation of 5-MOA to 4,6-dihydroxy-2-(hydroxymethyl)-3-methylbenzoic acid (DHMB). MpaDE then acts as a lactone synthase that catalyzes the ring closure to convert DHMB into DHMP. The next step is the prenylation of DHMP by the Golgi apparatus-associated prenyltransferase mpaA to yield farnesyl-DHMP (FDHMP). The ER-bound oxygenase mpaB then mediates the oxidative cleavage the C19-C20 double bond in FDHMP to yield FDHMP-3C via a mycophenolic aldehyde intermediate. The O-methyltransferase mpaG catalyzes the methylation of FDHMP-3C to yield MFDHMP-3C. After the cytosolic methylation of FDHMP-3C, MFDHMP-3C enters into peroxisomes probably via free diffusion due to its low molecular weight. Upon a peroxisomal CoA ligation reaction, catalyzed by a beta-oxidation component enzyme acyl-CoA ligase ACL891, MFDHMP-3C-CoA would then be restricted to peroxisomes for the following beta-oxidation pathway steps. The peroxisomal beta-oxidation machinery than converts MFDHMP-3C-CoA into MPA_CoA, via a beta-oxidation chain-shortening process. Finally mpaH acts as a peroxisomal acyl-CoA hydrolase with high substrate specificity toward MPA-CoA to release the final product MPA. This Penicillium brevicompactum protein is Type I acyl-CoA thioesterase mpaH'.